A 127-amino-acid polypeptide reads, in one-letter code: Putative histone H3.3-like type 3 (127 aa).

N6-acetyllysine is present on residues K6 and K15. N6-methylated lysine occurs at positions 19, 28, and 71.

Belongs to the histone H3 family. The nucleosome is a histone octamer containing two molecules each of H2A, H2B, H3 and H4 assembled in one H3-H4 heterotetramer and two H2A-H2B heterodimers. The octamer wraps approximately 147 bp of DNA. Post-translationally, acetylation is generally linked to gene activation.

The protein resides in the nucleus. The protein localises to the chromosome. In terms of biological role, putative variant histone H3 which may replace conventional H3 in a subset of nucleosomes. Nucleosomes wrap and compact DNA into chromatin, limiting DNA accessibility to the cellular machineries which require DNA as a template. Histones thereby play a central role in transcription regulation, DNA repair, DNA replication and chromosomal stability. DNA accessibility is regulated via a complex set of post-translational modifications of histones, also called histone code, and nucleosome remodeling. This is Putative histone H3.3-like type 3 (his-69) from Caenorhabditis elegans.